The primary structure comprises 338 residues: DNA-directed RNA polymerase subunit alpha (338 aa).

The tract at residues 1 to 226 (MLIAQRPTLT…ELFGLTRELN (226 aa)) is alpha N-terminal domain (alpha-NTD). The segment at 243 to 338 (YAESLGTPVE…DDDYAETEQY (96 aa)) is alpha C-terminal domain (alpha-CTD). Positions 319 to 338 (AAAEAYDEANDDDYAETEQY) are disordered. Residues 323-338 (AYDEANDDDYAETEQY) are compositionally biased toward acidic residues.

This sequence belongs to the RNA polymerase alpha chain family. Homodimer. The RNAP catalytic core consists of 2 alpha, 1 beta, 1 beta' and 1 omega subunit. When a sigma factor is associated with the core the holoenzyme is formed, which can initiate transcription.

The catalysed reaction is RNA(n) + a ribonucleoside 5'-triphosphate = RNA(n+1) + diphosphate. Its function is as follows. DNA-dependent RNA polymerase catalyzes the transcription of DNA into RNA using the four ribonucleoside triphosphates as substrates. This Cutibacterium acnes (strain DSM 16379 / KPA171202) (Propionibacterium acnes) protein is DNA-directed RNA polymerase subunit alpha.